The sequence spans 846 residues: Structure-specific endonuclease subunit SLX4 (846 aa).

Disordered stretches follow at residues 1–20 (MTDHGPDALDAFSPPRVGSA), 84–111 (KAGAENLPVHRTKRRKLGNQRDNTAESM), 123–164 (QPAE…VKKA), 283–322 (RTSKSLDSESLDTGTSSTSEGNGKRKQTKKAKRSAKSKIT), 480–513 (DPTPKITPKPGDERQSNLSNKNTERNIPEESSLL), 624–690 (PPNA…MGSQ), and 723–751 (TLASRSASSHITPQISSAPSQTVPIQTRA). The span at 141 to 153 (KPSEKGQKSEKTA) shows a compositional bias: basic and acidic residues. Residues 293–303 (LDTGTSSTSEG) are compositionally biased toward polar residues. A compositionally biased stretch (basic residues) spans 306 to 318 (KRKQTKKAKRSAK). Polar residues-rich tracts occupy residues 657-680 (KEITNPARSSWSTAKNLKSSSKPT) and 725-751 (ASRSASSHITPQISSAPSQTVPIQTRA).

It belongs to the SLX4 family. In terms of assembly, forms a heterodimer with SLX1. Post-translationally, phosphorylated in response to DNA damage.

It is found in the nucleus. Functionally, regulatory subunit of the SLX1-SLX4 structure-specific endonuclease that resolves DNA secondary structures generated during DNA repair and recombination. Has endonuclease activity towards branched DNA substrates, introducing single-strand cuts in duplex DNA close to junctions with ss-DNA. In Arthroderma otae (strain ATCC MYA-4605 / CBS 113480) (Microsporum canis), this protein is Structure-specific endonuclease subunit SLX4.